The primary structure comprises 393 residues: Riboflavin biosynthesis protein RibBA (393 aa).

Residues 1–200 (MQFDNIDSAL…IDDLIEYRKK (200 aa)) form a DHBP synthase region. Residues 27-28 (RE), Asp32, 139-143 (RNGHT), and Glu163 contribute to the D-ribulose 5-phosphate site. Glu28 contacts Mg(2+). Residue His142 coordinates Mg(2+). The tract at residues 201 to 393 (LEPEIEFKAK…TKKIKMGHLI (193 aa)) is GTP cyclohydrolase II. 249–253 (RLHSA) lines the GTP pocket. Zn(2+)-binding residues include Cys254, Cys265, and Cys267. Residues Gln270, 291–293 (EGR), and Thr313 each bind GTP. Catalysis depends on Asp325, which acts as the Proton acceptor; for GTP cyclohydrolase activity. Arg327 serves as the catalytic Nucleophile; for GTP cyclohydrolase activity. Residues Ser348 and Lys353 each contribute to the GTP site.

The protein in the N-terminal section; belongs to the DHBP synthase family. In the C-terminal section; belongs to the GTP cyclohydrolase II family. Mg(2+) serves as cofactor. Requires Mn(2+) as cofactor. The cofactor is Zn(2+).

It carries out the reaction D-ribulose 5-phosphate = (2S)-2-hydroxy-3-oxobutyl phosphate + formate + H(+). The enzyme catalyses GTP + 4 H2O = 2,5-diamino-6-hydroxy-4-(5-phosphoribosylamino)-pyrimidine + formate + 2 phosphate + 3 H(+). Its pathway is cofactor biosynthesis; riboflavin biosynthesis; 2-hydroxy-3-oxobutyl phosphate from D-ribulose 5-phosphate: step 1/1. It functions in the pathway cofactor biosynthesis; riboflavin biosynthesis; 5-amino-6-(D-ribitylamino)uracil from GTP: step 1/4. Its function is as follows. Catalyzes the conversion of D-ribulose 5-phosphate to formate and 3,4-dihydroxy-2-butanone 4-phosphate. In terms of biological role, catalyzes the conversion of GTP to 2,5-diamino-6-ribosylamino-4(3H)-pyrimidinone 5'-phosphate (DARP), formate and pyrophosphate. This chain is Riboflavin biosynthesis protein RibBA, found in Staphylococcus aureus (strain COL).